Consider the following 301-residue polypeptide: Probable alpha-L-glutamate ligase (301 aa).

An ATP-grasp domain is found at 104-287 (LQLLSRRGIG…VAGMIIEHLE (184 aa)). ATP-binding positions include K141, 178-179 (EY), D187, and 211-213 (RSN). D248, E260, and N262 together coordinate Mg(2+). The Mn(2+) site is built by D248, E260, and N262.

Belongs to the RimK family. The cofactor is Mg(2+). It depends on Mn(2+) as a cofactor.

The protein is Probable alpha-L-glutamate ligase of Pseudomonas putida (strain GB-1).